We begin with the raw amino-acid sequence, 249 residues long: Exosome complex component Rrp41 (249 aa).

It belongs to the RNase PH family. Rrp41 subfamily. As to quaternary structure, component of the archaeal exosome complex. Forms a hexameric ring-like arrangement composed of 3 Rrp41-Rrp42 heterodimers. The hexameric ring associates with a trimer of Rrp4 and/or Csl4 subunits.

Its subcellular location is the cytoplasm. In terms of biological role, catalytic component of the exosome, which is a complex involved in RNA degradation. Has 3'-&gt;5' exoribonuclease activity. Can also synthesize heteromeric RNA-tails. This is Exosome complex component Rrp41 from Pyrococcus abyssi (strain GE5 / Orsay).